The sequence spans 56 residues: Conotoxin Bu12 (56 aa).

The first 2 residues, 1 to 2, serve as a signal peptide directing secretion; that stretch reads TA. The propeptide occupies 3 to 25; sequence EDSRGTQLHRALRKATKLPVSTR. Intrachain disulfides connect cysteine 26/cysteine 40, cysteine 33/cysteine 44, and cysteine 39/cysteine 49.

The protein belongs to the conotoxin O1 superfamily. In terms of tissue distribution, expressed by the venom duct.

It is found in the secreted. The sequence is that of Conotoxin Bu12 from Conus bullatus (Bubble cone).